Consider the following 433-residue polypeptide: Homeobox protein Hox-D3 (433 aa).

Disordered stretches follow at residues 44 to 198, 258 to 280, and 401 to 433; these read STPH…SKRV, GILH…AAGH, and HHGP…LTHL. Over residues 58–74 the composition is skewed to polar residues; the sequence is SLDSDYPSSACSIQSSA. A compositionally biased stretch (gly residues) spans 97-106; the sequence is NSQGGGGGNQ. Over residues 116–132 the composition is skewed to pro residues; sequence PPQPPPPPPPTLPPSSP. Residues 146-159 are compositionally biased toward low complexity; the sequence is GGLSASSSSSTISK. The short motif at 161–166 is the Antp-type hexapeptide element; it reads IFPWMK. The span at 171–183 shows a compositional bias: polar residues; it reads NSKQKNSCATSGE. Positions 195–254 form a DNA-binding region, homeobox; it reads SKRVRTAYTSAQLVELEKEFHFNRYLCRPRRVEMANLLNLTERQIKIWFQNRRMKYKKDQ.

This sequence belongs to the Antp homeobox family. As to expression, detected in adult kidney, but not in other adult tissues tested.

It is found in the nucleus. Its function is as follows. Sequence-specific transcription factor which is part of a developmental regulatory system that provides cells with specific positional identities on the anterior-posterior axis. The chain is Homeobox protein Hox-D3 (Hoxd3) from Mus musculus (Mouse).